Reading from the N-terminus, the 307-residue chain is E3 ubiquitin-protein ligase PHF7 (307 aa).

The C2HC pre-PHD-type zinc-finger motif lies at 30-68 (SPVCLLCLQEPGDPEKLGEFLQKDNLCVHYFCLILSSRL). Residues cysteine 33, cysteine 36, histidine 58, and cysteine 61 each coordinate Zn(2+). Residues 67–92 (RLPQKGQPNRGLHGFMPEDIKREAVR) form a required for interaction and ubiquitination of the nucleosome core particle region. The PHD-type zinc finger occupies 96–145 (KICFVCKKKGAAIRCQNDQCVQNFHLPCGQERGCLSQFFGEYKSYCRKHR). 24 residues coordinate Zn(2+): cysteine 98, cysteine 101, cysteine 110, cysteine 115, histidine 120, cysteine 123, cysteine 141, histidine 144, cysteine 160, cysteine 163, cysteine 179, cysteine 180, histidine 186, cysteine 189, cysteine 204, cysteine 207, cysteine 248, cysteine 253, cysteine 273, cysteine 276, histidine 282, cysteine 285, cysteine 297, and cysteine 300. The tract at residues 150 to 307 (IHQGSLGEES…NECLPASTTS (158 aa)) is required for interaction with ubiquitinated UBE2D2. The segment at 160–208 (CVLCCENLSRTSVENIQSPCCSQAIYHRKCIQKYAHTSAKHFFKCPQCN) adopts an RING-type; degenerate zinc-finger fold. A required for association with and ubiquitination of H3 region spans residues 244–301 (RYRHCDAPICLYEQGRDSFEDEGRWRLILCATCGSHGTHRDCSSLRPNSKKWECNECL).

In terms of assembly, interacts with MEF2C; the interaction promotes MEF2C binding to its transcription targets. Interacts with GATA4; the interaction promotes GATA4 binding to its transcription targets. Interacts with UBE2D2; the interaction inhibits cleavage of PHF7 and promotes association of the complex with the nucleosome core particle. Expressed in Leydig cells and in developing spermatids (at protein level). Highly expressed in Sertoli cells in testis.

The protein resides in the nucleus. It catalyses the reaction S-ubiquitinyl-[E2 ubiquitin-conjugating enzyme]-L-cysteine + [acceptor protein]-L-lysine = [E2 ubiquitin-conjugating enzyme]-L-cysteine + N(6)-ubiquitinyl-[acceptor protein]-L-lysine.. It functions in the pathway protein modification; protein ubiquitination. E3 ubiquitin-protein ligase which ubiquitinates histone H3 at 'Lys-14'. Required for male fertility, via inhibition of SPOP-mediated BRDT degradation when in the presence of acetylated histone H4 in early condensing spermatids. Stabilization of BRDT allows it to facilitate histone removal in early condensing spermatids and promote the progression of histone-to-protamine exchange. Promotes the expression of steroidogenesis proteins in the testes, and as a result plays a role in maintaining testosterone levels and repressing osteoclastogenesis. Promotes transcription of cardiac enhancer genes by facilitating binding of cardiac transcription factors such as MEF2C and GATA4 to target gene promoters. Ubiquitinates histone H4. Ubiquitinates histone H2A and H3 as part of the nucleosome core particle. This is E3 ubiquitin-protein ligase PHF7 from Mus musculus (Mouse).